A 288-amino-acid polypeptide reads, in one-letter code: Putative aryl-alcohol dehydrogenase AAD10 (288 aa).

It belongs to the aldo/keto reductase family. Aldo/keto reductase 2 subfamily.

The polypeptide is Putative aryl-alcohol dehydrogenase AAD10 (AAD10) (Saccharomyces cerevisiae (strain ATCC 204508 / S288c) (Baker's yeast)).